Consider the following 378-residue polypeptide: Chaperone protein DnaJ (378 aa).

Residues 5–69 (EYYDRLGVSK…QKRAAYDQYG (65 aa)) enclose the J domain. The CR-type zinc finger occupies 134 to 216 (GVEKEVSYNR…CHGTGHEKQA (83 aa)). Cys147, Cys150, Cys164, Cys167, Cys190, Cys193, Cys204, and Cys207 together coordinate Zn(2+). 4 CXXCXGXG motif repeats span residues 147 to 154 (CGTCLGSG), 164 to 171 (CRKCHGSG), 190 to 197 (CDICHGSG), and 204 to 211 (CQTCHGTG).

It belongs to the DnaJ family. Homodimer. It depends on Zn(2+) as a cofactor.

It localises to the cytoplasm. Functionally, participates actively in the response to hyperosmotic and heat shock by preventing the aggregation of stress-denatured proteins and by disaggregating proteins, also in an autonomous, DnaK-independent fashion. Unfolded proteins bind initially to DnaJ; upon interaction with the DnaJ-bound protein, DnaK hydrolyzes its bound ATP, resulting in the formation of a stable complex. GrpE releases ADP from DnaK; ATP binding to DnaK triggers the release of the substrate protein, thus completing the reaction cycle. Several rounds of ATP-dependent interactions between DnaJ, DnaK and GrpE are required for fully efficient folding. Also involved, together with DnaK and GrpE, in the DNA replication of plasmids through activation of initiation proteins. In Streptococcus pyogenes serotype M6 (strain ATCC BAA-946 / MGAS10394), this protein is Chaperone protein DnaJ.